The sequence spans 370 residues: Ig heavy chain C region (370 aa).

Ig-like domains are found at residues 40–134 (PTVI…RNIT), 145–237 (PAIK…DSIH), and 247–347 (PSVS…RTVN). Residues asparagine 98, asparagine 132, asparagine 177, asparagine 343, asparagine 347, and asparagine 357 are each glycosylated (N-linked (GlcNAc...) asparagine).

The sequence is that of Ig heavy chain C region from Heterodontus francisci (Horn shark).